The primary structure comprises 255 residues: Pimeloyl-[acyl-carrier protein] methyl ester esterase (255 aa).

Substrate-binding positions include Trp-18, Ser-78–Leu-79, and Phe-139–Asp-143. Ser-78 functions as the Nucleophile in the catalytic mechanism. Catalysis depends on residues Asp-203 and His-233. His-233 lines the substrate pocket.

This sequence belongs to the AB hydrolase superfamily. Carboxylesterase BioH family. As to quaternary structure, monomer.

The protein localises to the cytoplasm. It catalyses the reaction 6-carboxyhexanoyl-[ACP] methyl ester + H2O = 6-carboxyhexanoyl-[ACP] + methanol + H(+). Its pathway is cofactor biosynthesis; biotin biosynthesis. Its function is as follows. The physiological role of BioH is to remove the methyl group introduced by BioC when the pimeloyl moiety is complete. It allows to synthesize pimeloyl-ACP via the fatty acid synthetic pathway through the hydrolysis of the ester bonds of pimeloyl-ACP esters. The protein is Pimeloyl-[acyl-carrier protein] methyl ester esterase of Xylella fastidiosa (strain M23).